The chain runs to 181 residues: Regulator of G-protein signaling 10 (181 aa).

The interval 1–35 is disordered; sequence MFTRAVSRLSRKRPPSDIHDGDGSSSSGHQSLKST. Residues Ser-24 and Ser-41 each carry the phosphoserine modification. The region spanning 41 to 156 is the RGS domain; sequence SLENLLEDPE…LKSDLFLKHR (116 aa). Residue Cys-74 is the site of S-palmitoyl cysteine attachment. The segment at 157-181 is disordered; it reads RTEEEEEDPPDAQTAAKRASRIYNT. Residue Ser-176 is modified to Phosphoserine.

In terms of assembly, interacts with GNAZ, GNAI1 and GNAI3. Associates specifically with the activated, GTP-bound forms of GNAZ and GNAI3.

It is found in the cytoplasm. It localises to the cytosol. The protein resides in the nucleus. Regulates G protein-coupled receptor signaling cascades, including signaling downstream of the muscarinic acetylcholine receptor CHRM2. Inhibits signal transduction by increasing the GTPase activity of G protein alpha subunits, thereby driving them into their inactive GDP-bound form. Modulates the activity of potassium channels that are activated in response to CHRM2 signaling. Activity on GNAZ is inhibited by palmitoylation of the G-protein. The polypeptide is Regulator of G-protein signaling 10 (Rgs10) (Rattus norvegicus (Rat)).